Here is a 161-residue protein sequence, read N- to C-terminus: Putative pre-16S rRNA nuclease (161 aa).

This sequence belongs to the YqgF nuclease family.

The protein localises to the cytoplasm. Could be a nuclease involved in processing of the 5'-end of pre-16S rRNA. The chain is Putative pre-16S rRNA nuclease from Methylocella silvestris (strain DSM 15510 / CIP 108128 / LMG 27833 / NCIMB 13906 / BL2).